Here is a 333-residue protein sequence, read N- to C-terminus: Heat shock transcription factor, X-linked member 3 (333 aa).

Residues 1 to 66 (MASQNTEQEY…QDNSPPEDRN (66 aa)) form a disordered region. The span at 29 to 39 (GSSPDPNPDSS) shows a compositional bias: low complexity. A compositionally biased stretch (polar residues) spans 49–60 (AMSQDPGSQDNS). A DNA-binding region spans residues 79-182 (FRLSFPRKLW…PRLLENIQRK (104 aa)). Residues 227–275 (QGAPSVQGPSGTQSFRRSGMWSKKSATRHPLGNGPPQEPNGPSWEGTSG) form a disordered region. Polar residues predominate over residues 228 to 242 (GAPSVQGPSGTQSFR).

It belongs to the HSF family.

The protein resides in the nucleus. This Homo sapiens (Human) protein is Heat shock transcription factor, X-linked member 3.